The following is a 286-amino-acid chain: Bark leucoagglutinin (286 aa).

The signal sequence occupies residues Ala-1 to Ser-28. Tyr-73 contributes to the N-acetyl-alpha-neuraminyl-(2-&gt;3)-beta-D-galactosyl-(1-&gt;4)-beta-D-glucose binding site. N-linked (GlcNAc...) asparagine glycosylation is present at Asn-89. Residues Asp-115 and Lys-135 each coordinate N-acetyl-alpha-neuraminyl-(2-&gt;3)-beta-D-galactosyl-(1-&gt;4)-beta-D-glucose. Asn-141 carries an N-linked (GlcNAc...) asparagine glycan. Mn(2+) is bound by residues Glu-155 and Asp-157. The Ca(2+) site is built by Asp-157, Tyr-159, Asp-165, and Asp-168. Residues Tyr-159 and Asp-165 each contribute to the N-acetyl-alpha-neuraminyl-(2-&gt;3)-beta-D-galactosyl-(1-&gt;4)-beta-D-glucose site. 2 residues coordinate Mn(2+): Asp-168 and His-173. 2 N-linked (GlcNAc...) asparagine glycosylation sites follow: Asn-207 and Asn-219. The propeptide at Asn-278–Ala-286 is removed in mature form.

Belongs to the leguminous lectin family.

Sialic acid-binding lectin specifically recognizing the trisaccharide sequence Neu5Ac/Gc-alpha-2,3-Gal-beta-1,4-GlcNAc/Glc. The sequence is that of Bark leucoagglutinin from Maackia amurensis (Amur maackia).